Here is an 846-residue protein sequence, read N- to C-terminus: Rho GTPase-activating protein 17 (846 aa).

One can recognise a BAR domain in the interval 14 to 246 (QTVGRAEKTE…MRAHQDKWAE (233 aa)). A Rho-GAP domain is found at 252–442 (TPLEEHLKRS…PIIQHADWFF (191 aa)). The segment covering 459–475 (TPNSNHSSHTGNDSDSG) has biased composition (polar residues). A disordered region spans residues 459–482 (TPNSNHSSHTGNDSDSGTLERKRP). Ser-484 and Ser-575 each carry phosphoserine. The segment at 519 to 807 (IAPAFQPPLP…ASRIVTDTNS (289 aa)) is disordered. Residues 592–619 (RNSNQMTTVPNQAQTGGNSHQLSVSTPH) are compositionally biased toward polar residues. Residues 637–650 (APAPPKPGNLPPGH) show a composition bias toward pro residues. Low complexity predominate over residues 653–690 (GQSSPGTGTSPKPSARSPSPPQQQQQQQQQQQQQQQQQ). 2 positions are modified to phosphoserine: Ser-698 and Ser-700. Pro residues-rich tracts occupy residues 704–717 (IQAP…PPTQ) and 726–741 (EPGP…PSTP). Residues Thr-730, Thr-734, and Thr-736 each carry the phosphothreonine modification. Positions 730 to 743 (TPPQTPTPPSTPPL) match the SH3-binding motif. Ser-739 carries the post-translational modification Phosphoserine. Position 740 is a phosphothreonine (Thr-740). Over residues 746–757 (QNPSQSETTQLH) the composition is skewed to polar residues. A compositionally biased stretch (pro residues) spans 772-782 (RPSVPPPPHPP). Polar residues predominate over residues 791–807 (LTSSVPTASRIVTDTNS).

In terms of assembly, component of a complex whose core is composed of ARHGAP17, AMOT, PALS1, PATJ and PARD3/PAR3. Interacts with NHERF1, FNBP1, TRIP10, CAPZA (CAPZA1, CAPZA2 or CAPZA3), CAPZB, CD2AP and SH3KBP1/CIN85.

It is found in the membrane. Its subcellular location is the cytoplasm. The protein resides in the cell junction. The protein localises to the tight junction. Functionally, rho GTPase-activating protein involved in the maintenance of tight junction by regulating the activity of CDC42, thereby playing a central role in apical polarity of epithelial cells. Specifically acts as a GTPase activator for the CDC42 GTPase by converting it to an inactive GDP-bound state. The complex formed with AMOT acts by regulating the uptake of polarity proteins at tight junctions, possibly by deciding whether tight junction transmembrane proteins are recycled back to the plasma membrane or sent elsewhere. Participates in the Ca(2+)-dependent regulation of exocytosis, possibly by catalyzing GTPase activity of Rho family proteins and by inducing the reorganization of the cortical actin filaments. Acts as a GTPase activator in vitro for RAC1. In Mus musculus (Mouse), this protein is Rho GTPase-activating protein 17 (Arhgap17).